Here is a 616-residue protein sequence, read N- to C-terminus: MAU2 chromatid cohesion factor homolog (616 aa).

TPR repeat units lie at residues 90–123 (FDTASLLAQLYQQQEQSSLAKPVLRKAIELSQHN), 445–478 (GSFYYVQGLNAFHKSSFHEAKRFLRETLKMANAE), and 485–518 (SCSLVLLSHVFLSIGNSKESMNMVTPAMQLASKI).

Belongs to the SCC4/mau-2 family. As to quaternary structure, component of the cohesin loading complex.

It localises to the nucleus. It is found in the nucleoplasm. Required for association of the cohesin complex with chromatin during interphase. Plays a role in sister chromatid cohesion and normal progression through prometaphase. The protein is MAU2 chromatid cohesion factor homolog of Culex quinquefasciatus (Southern house mosquito).